A 295-amino-acid chain; its full sequence is MNEKDLKLMVEQLVSQMVGQVDMQSVEKVVKEVSKNQSQVESDEFIPDITEIDIKKQLLVDNPADREAYLEMKAKTPARLGSGRAGARYKTITALRMRADHAAAQDSVFSDVSEEFIKKNNFIPVKTMCTDKDEYVTRPDLGRRFSPETTEIIKEKCDKNPKVQIMVGDGLSSAAIEANVEDILPSIEQGLKMYGLNVGPILFVKYCRVPAMDAVGEATGADVVCLLVGERPGLVTAESMSAYIAYKPKVGMPEAKRTVISNIHKGGTTAVEAGAHIAELIKTMLDKKASGIDLK.

Residues valine 209 and glutamate 230 each contribute to the adenosylcob(III)alamin site.

This sequence belongs to the EutC family. As to quaternary structure, the basic unit is a heterodimer which dimerizes to form tetramers. The heterotetramers trimerize; 6 large subunits form a core ring with 6 small subunits projecting outwards. The cofactor is adenosylcob(III)alamin.

The protein localises to the bacterial microcompartment. The enzyme catalyses ethanolamine = acetaldehyde + NH4(+). It functions in the pathway amine and polyamine degradation; ethanolamine degradation. Functionally, catalyzes the deamination of various vicinal amino-alcohols to oxo compounds. Allows this organism to utilize ethanolamine as the sole source of nitrogen and carbon in the presence of external vitamin B12. The polypeptide is Ethanolamine ammonia-lyase small subunit (Clostridium perfringens (strain ATCC 13124 / DSM 756 / JCM 1290 / NCIMB 6125 / NCTC 8237 / Type A)).